Here is a 730-residue protein sequence, read N- to C-terminus: UvrABC system protein C (730 aa).

One can recognise a GIY-YIG domain in the interval 16–95 (AAPGVYKFRD…IKEFDPRFNV (80 aa)). The UVR domain maps to 208–243 (DKLVKDLEKRMQQASEDLDFETAARLRDDIGALRKA). The interval 678–730 (ARALPAAVGDDELDKESESSVTSADAPSAESGSGDEGSESRELSMPTTGPSAQ) is disordered.

This sequence belongs to the UvrC family. In terms of assembly, interacts with UvrB in an incision complex.

The protein localises to the cytoplasm. In terms of biological role, the UvrABC repair system catalyzes the recognition and processing of DNA lesions. UvrC both incises the 5' and 3' sides of the lesion. The N-terminal half is responsible for the 3' incision and the C-terminal half is responsible for the 5' incision. In Rhodococcus erythropolis (strain PR4 / NBRC 100887), this protein is UvrABC system protein C.